The sequence spans 421 residues: MWYHKLLHQQSRLQNLMKRGDIAHGLRLSGFKSLFPFSLHWCHTASKSVNCTWHQHEDHLELQYASTVMRFDYVWLRDHCRSASCYNSKTHQRSLDTASVDLCIKPKTIRLDESTLFFTWPDGHVTRYDLDWLVKNSYEGQKQEVIQPRVLWNAKLYQDAQLPSVDFQGFLETKEGLKKFLQNFLLYGIAFVENVPPTQEHTEKLARRVSLIRETIYGRMWYFTSDFSRGDTAYTKLALDRHTDTTYFQEPCGIQVFHCLKHEGTGGRTLLVDGFYAAQQVLQRAPEEFDLLSQVPLKHEYIENVGQCHNHMIGVGPILNIYPWNKELYLIRYNNYDRAVINTVPYDVVRRWYAAHRTLTTELRRPENELWVKLKPGKVLFIDNWRVLHGRESFTGYRQLCGCYLTRDDVLNTARILGLHA.

A mitochondrion-targeting transit peptide spans 1 to 15 (MWYHKLLHQQSRLQN). Lysine 179 and lysine 236 each carry N6-acetyllysine. The Fe cation site is built by histidine 242, aspartate 244, and histidine 389.

The protein belongs to the gamma-BBH/TMLD family. In terms of assembly, homodimer. It depends on Fe(2+) as a cofactor. L-ascorbate is required as a cofactor.

It is found in the mitochondrion matrix. It catalyses the reaction N(6),N(6),N(6)-trimethyl-L-lysine + 2-oxoglutarate + O2 = (3S)-3-hydroxy-N(6),N(6),N(6)-trimethyl-L-lysine + succinate + CO2. The protein operates within amine and polyamine biosynthesis; carnitine biosynthesis. Its function is as follows. Converts trimethyllysine (TML) into hydroxytrimethyllysine (HTML). This chain is Trimethyllysine dioxygenase, mitochondrial (Tmlhe), found in Rattus norvegicus (Rat).